We begin with the raw amino-acid sequence, 64 residues long: Large ribosomal subunit protein bL28 (64 aa).

The protein belongs to the bacterial ribosomal protein bL28 family.

The chain is Large ribosomal subunit protein bL28 from Bifidobacterium longum (strain NCC 2705).